The sequence spans 99 residues: HssA/B-like protein 42 (99 aa).

The segment at 1 to 29 is disordered; that stretch reads MTLFSSISSMSTSMSGSKSSISSFGSGTS.

It belongs to the hssA/B family.

This is HssA/B-like protein 42 (hssl42) from Dictyostelium discoideum (Social amoeba).